The following is a 256-amino-acid chain: Imidazole glycerol phosphate synthase subunit HisF (256 aa).

Catalysis depends on residues Asp12 and Asp131.

Belongs to the HisA/HisF family. As to quaternary structure, heterodimer of HisH and HisF.

Its subcellular location is the cytoplasm. It carries out the reaction 5-[(5-phospho-1-deoxy-D-ribulos-1-ylimino)methylamino]-1-(5-phospho-beta-D-ribosyl)imidazole-4-carboxamide + L-glutamine = D-erythro-1-(imidazol-4-yl)glycerol 3-phosphate + 5-amino-1-(5-phospho-beta-D-ribosyl)imidazole-4-carboxamide + L-glutamate + H(+). The protein operates within amino-acid biosynthesis; L-histidine biosynthesis; L-histidine from 5-phospho-alpha-D-ribose 1-diphosphate: step 5/9. Functionally, IGPS catalyzes the conversion of PRFAR and glutamine to IGP, AICAR and glutamate. The HisF subunit catalyzes the cyclization activity that produces IGP and AICAR from PRFAR using the ammonia provided by the HisH subunit. This chain is Imidazole glycerol phosphate synthase subunit HisF, found in Renibacterium salmoninarum (strain ATCC 33209 / DSM 20767 / JCM 11484 / NBRC 15589 / NCIMB 2235).